The following is a 654-amino-acid chain: MAAAALGSSSGSASPAVAELCQNTPETFLEASKLLLTYADNILRNPNDEKYRSIRIGNTAFSTRLLPVRGAVECLFEMGFEEGETHLIFPKKASVEQLQKIRDLIAIERSSRLDGSNKSHKVESSQQPAASTQLPTTPSSNPSGLNQHTRNRQGQSPDPPSASTVTPDSAILGVLQSNIQHVLVYENPALQEKALACIPVQELKRKSQEKLSRVRKLDKGTNISDEDFLLLELLHWFKEEFFHWVNNILCSKCGGQTRSRDRSLLPNDDELKWGAKKVEDHYCDACQFSNRFPRYNNPEKLLETRCGRCGEWANCFTLCCRALGFEARYVWDYTDHVWTEVYSPSQQRWLHCDACEDVCDKPLLYEIGWGKKLSYVIAFSKDEVVDVTWRYSCKHEEVIARRTKVKEALLRETINGLNKQRQLFLSENRRKELLQRIIVELVEFISPKTPKPGELGGRISGSVAWRVARGEMGLQRKETSFIPSENEKISKQLHLCYNIVKDRYVRVSNNNQTISGWENGVWKMESIFRKVETDWHMVYLARKEGSSFAYISWKFECGSVGLKIDSISIRTTSQTFQTGTIEWKLRSDTARVELTGDNNLHSYADFSGATEVILEAELSRGDGDVAWQHTQLFRQSLNDHEENCLEIIIKFSDL.

Ala-2 bears the N-acetylalanine mark. A PUB domain is found at 30 to 91; that stretch reads EASKLLLTYA…EGETHLIFPK (62 aa). The segment covering 112–123 has biased composition (basic and acidic residues); the sequence is RLDGSNKSHKVE. The interval 112–167 is disordered; that stretch reads RLDGSNKSHKVESSQQPAASTQLPTTPSSNPSGLNQHTRNRQGQSPDPPSASTVTP. The segment covering 124-167 has biased composition (polar residues); that stretch reads SSQQPAASTQLPTTPSSNPSGLNQHTRNRQGQSPDPPSASTVTP. Thr-137 carries the post-translational modification Phosphothreonine. Cys-250, Cys-253, Cys-283, and Cys-286 together coordinate Zn(2+). Cys-309 serves as the catalytic Nucleophile. Catalysis depends on residues His-336 and Asp-353. The 201-residue stretch at 454-654 folds into the PAW domain; the sequence is ELGGRISGSV…LEIIIKFSDL (201 aa).

This sequence belongs to the transglutaminase-like superfamily. PNGase family. In terms of assembly, component of a complex required to couple retrotranslocation, ubiquitination and deglycosylation composed of NGLY1, SAKS1, AMFR, VCP and RAD23B. Interacts with the proteasome components RAD23B and PSMC1. Interacts with directly with VCP. Interacts with DERL1, bringing it close to the endoplasmic reticulum membrane. Interacts with SAKS1. Zn(2+) is required as a cofactor.

The protein resides in the cytoplasm. The enzyme catalyses Hydrolysis of an N(4)-(acetyl-beta-D-glucosaminyl)asparagine residue in which the glucosamine residue may be further glycosylated, to yield a (substituted) N-acetyl-beta-D-glucosaminylamine and a peptide containing an aspartate residue.. Its activity is regulated as follows. Inhibited by Z-VAD-fmk, a well-known caspase inhibitor, which inhibits enzyme activity through covalent binding of the carbohydrate to the single Cys-306 residue. Specifically deglycosylates the denatured form of N-linked glycoproteins in the cytoplasm and assists their proteasome-mediated degradation. Cleaves the beta-aspartyl-glucosamine (GlcNAc) of the glycan and the amide side chain of Asn, converting Asn to Asp. Prefers proteins containing high-mannose over those bearing complex type oligosaccharides. Can recognize misfolded proteins in the endoplasmic reticulum that are exported to the cytosol to be destroyed and deglycosylate them, while it has no activity toward native proteins. Deglycosylation is a prerequisite for subsequent proteasome-mediated degradation of some, but not all, misfolded glycoproteins. In Macaca fascicularis (Crab-eating macaque), this protein is Peptide-N(4)-(N-acetyl-beta-glucosaminyl)asparagine amidase (NGLY1).